The primary structure comprises 1174 residues: MFELNNFDALQIGLASTEKIREWSRGEVKKPETINYRTLKPERDGLFCERIFGPQKDWECHCGKYKRIRYKGIVCDRCGVEVTKAKVRRERMGHIELAAPVSHIWYFKGIPSRMGLILDMSPRALEKVLYFASYVVLDPKETQLLKKQLLTEKEYREAVDKYGEQNFVASMGAESVKKLLEEIDLEQLSLVLKEDLKNSTGQKKIRIIRRLEVVESFRKSGNRPEWMVIDVIPVIPPDLRPMVQLDGGRFATSDLNDLYRRVINRNNRLKKLLDLGAPDIIVRNEKRMLQEAVDALIDNGRRGRPVTGPGNRPLKSLSDMLKGKQGRFRQNLLGKRVDYSGRSVIVVGPELKMYQCGLPKEMALELFKPFVMKKLVERGLAHNIKSAKRMVERVQAQVWDVLEEVISDHPVLLNRAPTLHRLGIQAFQPVLVEGRAIKLHPLSCTAYNADFDGDQMAVHVPLSVEAQSEARFLMLAAHNILKPSDGKPVVVPTQDMVLGSYYLTVEREGAKGEGRYFSFPDEVIMAYQLKQIDINAKIKVKMTKIIDGKYISGIIDATAGKIIFNECVPQDLGFIDRSKPGNEFKLEIDFLVAKKNLGKIINKCYMKHGATKTSIMLDKIKARGYHYSTISGITVSTSDMEVPEAKKRLLSESDAAVDKIEKMYRRGFISEDERYQRVIERWTKTTEDVADELMNNLDKFNPIFMMADSGARGSKSQIKQLAGMRGLMANPSGKIIELPIRASFREGLDVLEYFISTHGARKGNADTALKTADSGYLTRRLVDVSQDVIVREEDCGTYEGYDVSEIKEGNEVIESLSERLTGRYSAEDIIDPNNHQIIVPKNSYMDSKLADRIEASGIKKVKIRSVFTCKSRHGVCSKCYGMNMATAQKIDIGESVGIIAAQSIGEPGTQLTMRTFHTGGVAGSDITQGLPRVEELFEARKPKGLAIVSEVSGTVKMEETKKKRSVSVITDNGEEVTYDIPFGSRIKVSNGDLISAGDEVTEGSVNPHDILRIKGVQGVKNYLLSEVQKVYRLQGVDINDKHLEVVIRQMTRKIKIEESGDTELLPGTMIDIFDFEEENARVEASGGSAAQGRVALLGITKAALATESFLSAASFQETTRVLTDAAIKGKIDPLLGLKENVIIGKLIPAGTGMTRYRSIKINTENEVQENQLEA.

Cys60, Cys62, Cys75, and Cys78 together coordinate Zn(2+). Mg(2+) is bound by residues Asp450, Asp452, and Asp454. Zn(2+) is bound by residues Cys795, Cys869, Cys876, and Cys879.

It belongs to the RNA polymerase beta' chain family. As to quaternary structure, the RNAP catalytic core consists of 2 alpha, 1 beta, 1 beta' and 1 omega subunit. When a sigma factor is associated with the core the holoenzyme is formed, which can initiate transcription. Mg(2+) is required as a cofactor. The cofactor is Zn(2+).

It catalyses the reaction RNA(n) + a ribonucleoside 5'-triphosphate = RNA(n+1) + diphosphate. DNA-dependent RNA polymerase catalyzes the transcription of DNA into RNA using the four ribonucleoside triphosphates as substrates. The polypeptide is DNA-directed RNA polymerase subunit beta' (Clostridium kluyveri (strain ATCC 8527 / DSM 555 / NBRC 12016 / NCIMB 10680 / K1)).